We begin with the raw amino-acid sequence, 285 residues long: Tryptophan synthase alpha chain (285 aa).

Active-site proton acceptor residues include glutamate 53 and aspartate 64.

It belongs to the TrpA family. As to quaternary structure, tetramer of two alpha and two beta chains.

It carries out the reaction (1S,2R)-1-C-(indol-3-yl)glycerol 3-phosphate + L-serine = D-glyceraldehyde 3-phosphate + L-tryptophan + H2O. Its pathway is amino-acid biosynthesis; L-tryptophan biosynthesis; L-tryptophan from chorismate: step 5/5. In terms of biological role, the alpha subunit is responsible for the aldol cleavage of indoleglycerol phosphate to indole and glyceraldehyde 3-phosphate. This Bordetella parapertussis (strain 12822 / ATCC BAA-587 / NCTC 13253) protein is Tryptophan synthase alpha chain.